Consider the following 205-residue polypeptide: Small ribosomal subunit protein uS4 (205 aa).

Over residues 1–16 (MSKRETTKYKIDRRMG) the composition is skewed to basic and acidic residues. Residues 1–46 (MSKRETTKYKIDRRMGENIWGRPKSPVNRRDYGPGQHGQRRKGKLS) are disordered. The S4 RNA-binding domain occupies 94–157 (SRLDAVVYRA…KQLVLVLESV (64 aa)).

This sequence belongs to the universal ribosomal protein uS4 family. Part of the 30S ribosomal subunit. Contacts protein S5. The interaction surface between S4 and S5 is involved in control of translational fidelity.

Functionally, one of the primary rRNA binding proteins, it binds directly to 16S rRNA where it nucleates assembly of the body of the 30S subunit. In terms of biological role, with S5 and S12 plays an important role in translational accuracy. This Bartonella tribocorum (strain CIP 105476 / IBS 506) protein is Small ribosomal subunit protein uS4.